Here is a 279-residue protein sequence, read N- to C-terminus: Probable endonuclease 4 (279 aa).

Zn(2+) contacts are provided by H69, H109, E145, D179, H182, H216, D229, H231, and E261.

Belongs to the AP endonuclease 2 family. It depends on Zn(2+) as a cofactor.

The enzyme catalyses Endonucleolytic cleavage to 5'-phosphooligonucleotide end-products.. Functionally, endonuclease IV plays a role in DNA repair. It cleaves phosphodiester bonds at apurinic or apyrimidinic (AP) sites, generating a 3'-hydroxyl group and a 5'-terminal sugar phosphate. This Buchnera aphidicola subsp. Schizaphis graminum (strain Sg) protein is Probable endonuclease 4.